The chain runs to 158 residues: NADPH-dependent 7-cyano-7-deazaguanine reductase (158 aa).

Positions 1–13 (MAKRSNTTMTSAG) are enriched in polar residues. Residues 1 to 37 (MAKRSNTTMTSAGLQLGREVAPPDSPETAKLDRVPNP) form a disordered region. Residues 27 to 37 (ETAKLDRVPNP) are compositionally biased toward basic and acidic residues. Catalysis depends on C56, which acts as the Thioimide intermediate. The active-site Proton donor is the D63. Substrate contacts are provided by residues 78-80 (VES) and 97-98 (HE).

The protein belongs to the GTP cyclohydrolase I family. QueF type 1 subfamily.

Its subcellular location is the cytoplasm. The enzyme catalyses 7-aminomethyl-7-carbaguanine + 2 NADP(+) = 7-cyano-7-deazaguanine + 2 NADPH + 3 H(+). It participates in tRNA modification; tRNA-queuosine biosynthesis. Its function is as follows. Catalyzes the NADPH-dependent reduction of 7-cyano-7-deazaguanine (preQ0) to 7-aminomethyl-7-deazaguanine (preQ1). This chain is NADPH-dependent 7-cyano-7-deazaguanine reductase, found in Bradyrhizobium sp. (strain ORS 278).